The chain runs to 238 residues: Thrombin-like enzyme halystase (238 aa).

In terms of domain architecture, Peptidase S1 spans 1 to 229 (IIGGDECNIN…HLDWIKSIIA (229 aa)). 6 disulfides stabilise this stretch: Cys-7–Cys-141, Cys-28–Cys-44, Cys-76–Cys-236, Cys-120–Cys-190, Cys-152–Cys-169, and Cys-180–Cys-205. His-43 serves as the catalytic Charge relay system. Asn-81 carries N-linked (GlcNAc...) asparagine glycosylation. The active-site Charge relay system is the Asp-88. Asn-100 carries an N-linked (GlcNAc...) asparagine glycan. The Charge relay system role is filled by Ser-184.

It belongs to the peptidase S1 family. Snake venom subfamily. In terms of assembly, monomer. Expressed by the venom gland.

The protein resides in the secreted. With respect to regulation, inhibited by diisopropylfluorophosphate (DFP), PMSF and leupeptin. Its function is as follows. Thrombin-like snake venom serine protease. Cleaves fibrinogen (beta chain of fibrinogen (FGB) and more slowly alpha chain (FGA)) without inducing fibrin clotting and cleaves kininogen to produce bradykinin (KNG), resulting in the reduction of blood pressure. This chain is Thrombin-like enzyme halystase, found in Gloydius blomhoffii (Mamushi).